A 629-amino-acid polypeptide reads, in one-letter code: Dihydroxy-acid dehydratase 2 (629 aa).

Aspartate 82 lines the Mg(2+) pocket. Residue cysteine 123 participates in [2Fe-2S] cluster binding. Mg(2+) contacts are provided by aspartate 124 and lysine 125. Lysine 125 carries the post-translational modification N6-carboxylysine. A [2Fe-2S] cluster-binding site is contributed by cysteine 197. Residue glutamate 493 participates in Mg(2+) binding. The Proton acceptor role is filled by serine 519. A disordered region spans residues aspartate 603 to glycine 629.

This sequence belongs to the IlvD/Edd family. In terms of assembly, homodimer. The cofactor is [2Fe-2S] cluster. Requires Mg(2+) as cofactor.

It carries out the reaction (2R)-2,3-dihydroxy-3-methylbutanoate = 3-methyl-2-oxobutanoate + H2O. It catalyses the reaction (2R,3R)-2,3-dihydroxy-3-methylpentanoate = (S)-3-methyl-2-oxopentanoate + H2O. Its pathway is amino-acid biosynthesis; L-isoleucine biosynthesis; L-isoleucine from 2-oxobutanoate: step 3/4. It participates in amino-acid biosynthesis; L-valine biosynthesis; L-valine from pyruvate: step 3/4. Functions in the biosynthesis of branched-chain amino acids. Catalyzes the dehydration of (2R,3R)-2,3-dihydroxy-3-methylpentanoate (2,3-dihydroxy-3-methylvalerate) into 2-oxo-3-methylpentanoate (2-oxo-3-methylvalerate) and of (2R)-2,3-dihydroxy-3-methylbutanoate (2,3-dihydroxyisovalerate) into 2-oxo-3-methylbutanoate (2-oxoisovalerate), the penultimate precursor to L-isoleucine and L-valine, respectively. This Nocardia farcinica (strain IFM 10152) protein is Dihydroxy-acid dehydratase 2.